A 73-amino-acid polypeptide reads, in one-letter code: Omega-conotoxin CVID (73 aa).

The signal sequence occupies residues methionine 1–alanine 22. A propeptide spanning residues aspartate 23–arginine 45 is cleaved from the precursor. Disulfide bonds link cysteine 46–cysteine 61, cysteine 53–cysteine 65, and cysteine 60–cysteine 72. Position 72 is a cysteine amide (cysteine 72).

Belongs to the conotoxin O1 superfamily. In terms of tissue distribution, expressed by the venom duct.

It is found in the secreted. Functionally, omega-conotoxins act at presynaptic membranes, they bind and block voltage-gated calcium channels. This toxin inhibits neurotransmitter release, it blocks N-type calcium channels, probably a N-type (Cav2.2/CACNA1B) calcium channel variant. In Conus catus (Cat cone), this protein is Omega-conotoxin CVID.